We begin with the raw amino-acid sequence, 576 residues long: Aspartate--tRNA ligase, cytoplasmic 1 (576 aa).

The interval 1–78 (MSETTPVPVG…NWGELPMNQS (78 aa)) is disordered. Residues 20-43 (LKKEQKKLEKEKKIAEAKAKKAAE) show a composition bias toward basic and acidic residues. L-aspartate is bound at residue Glu302. The aspartate stretch occupies residues 324–327 (QLYK). Arg346 provides a ligand contact to L-aspartate. Residues 346–348 (RAE), 354–356 (RHL), and Glu499 each bind ATP. The L-aspartate site is built by Ser502 and Arg506. An ATP-binding site is contributed by 547-550 (GLER).

Belongs to the class-II aminoacyl-tRNA synthetase family. Type 2 subfamily.

It localises to the cytoplasm. The catalysed reaction is tRNA(Asp) + L-aspartate + ATP = L-aspartyl-tRNA(Asp) + AMP + diphosphate. The chain is Aspartate--tRNA ligase, cytoplasmic 1 (aspS1) from Dictyostelium discoideum (Social amoeba).